The chain runs to 327 residues: Ventral anterior homeobox 1 (327 aa).

A compositionally biased stretch (basic and acidic residues) spans 1-34; that stretch reads MFGKQDKMDVRCSTETEANRVSKNGHKEGKDSKG. A disordered region spans residues 1 to 41; sequence MFGKQDKMDVRCSTETEANRVSKNGHKEGKDSKGAEGNIST. A DNA-binding region (homeobox) is located at residues 99-158; it reads PKRTRTSFTAEQLYRLEMEFQRCQYVVGRERTELARQLNLSETQVKVWFQNRRTKQKKDQ. Over residues 230 to 245 the composition is skewed to low complexity; the sequence is APAGGSPHPPSAGTAA. A disordered region spans residues 230–249; that stretch reads APAGGSPHPPSAGTAAGPPP.

Belongs to the EMX homeobox family.

It is found in the nucleus. Transcription factor that plays a role in establishing dorsal-ventral polarity in the neural retina. This chain is Ventral anterior homeobox 1 (VAX1), found in Gallus gallus (Chicken).